A 264-amino-acid polypeptide reads, in one-letter code: tRNA pseudouridine synthase A (264 aa).

The active-site Nucleophile is the D56. Y114 is a binding site for substrate.

This sequence belongs to the tRNA pseudouridine synthase TruA family. As to quaternary structure, homodimer.

The catalysed reaction is uridine(38/39/40) in tRNA = pseudouridine(38/39/40) in tRNA. In terms of biological role, formation of pseudouridine at positions 38, 39 and 40 in the anticodon stem and loop of transfer RNAs. The chain is tRNA pseudouridine synthase A from Buchnera aphidicola subsp. Baizongia pistaciae (strain Bp).